The chain runs to 347 residues: NADH-ubiquinone oxidoreductase chain 2 (347 aa).

Transmembrane regions (helical) follow at residues Met-1–Thr-21, His-25–Met-45, Tyr-59–Val-79, Ile-96–Pro-116, Gly-127–Pro-147, Ile-149–Gly-169, Ile-178–Pro-198, Thr-201–Leu-221, Leu-240–Phe-260, Asp-274–Met-294, and Ile-326–Leu-346.

It belongs to the complex I subunit 2 family. As to quaternary structure, core subunit of respiratory chain NADH dehydrogenase (Complex I) which is composed of 45 different subunits. Interacts with TMEM242.

The protein resides in the mitochondrion inner membrane. The enzyme catalyses a ubiquinone + NADH + 5 H(+)(in) = a ubiquinol + NAD(+) + 4 H(+)(out). Core subunit of the mitochondrial membrane respiratory chain NADH dehydrogenase (Complex I) which catalyzes electron transfer from NADH through the respiratory chain, using ubiquinone as an electron acceptor. Essential for the catalytic activity and assembly of complex I. The protein is NADH-ubiquinone oxidoreductase chain 2 of Dobsonia minor (Lesser bare-backed fruit bat).